The chain runs to 680 residues: Epithelial splicing regulatory protein 1 (680 aa).

RRM domains are found at residues 224-301 (TVVR…KATG), 325-405 (VIVR…RSTA), and 444-524 (DCIR…QCSA). At S542 the chain carries Phosphoserine. R581 is subject to Omega-N-methylarginine.

It belongs to the ESRP family. As to expression, epithelial cell-specific. Epithelial-specific expression in diverse tissues and organs with particularly notable levels of expression in skin and gastrointestinal epithelia.

It is found in the nucleus. MRNA splicing factor that regulates the formation of epithelial cell-specific isoforms. Specifically regulates the expression of FGFR2-IIIb, an epithelial cell-specific isoform of FGFR2. Also regulates the splicing of CD44, CTNND1, ENAH, 3 transcripts that undergo changes in splicing during the epithelial-to-mesenchymal transition (EMT). Acts by directly binding specific sequences in mRNAs. Binds the GU-rich sequence motifs in the ISE/ISS-3, a cis-element regulatory region present in the mRNA of FGFR2. Regulates splicing and expression of genes involved in inner ear development, auditory hair cell differentiation, and cell fate specification in the cochlear epithelium. The protein is Epithelial splicing regulatory protein 1 (Esrp1) of Mus musculus (Mouse).